A 765-amino-acid chain; its full sequence is Endothelin-converting enzyme 2 (765 aa).

At 1-60 (MSVALQELGGGGNMVEYKRATLRDEDAPETPVEGGASPDAVEAGFRKRTSRLLGLHTQLE) the chain is on the cytoplasmic side. The chain crosses the membrane as a helical; Signal-anchor for type II membrane protein span at residues 61-81 (LVLAGVSLLLAALLLGCLVAL). Residues 82–765 (GVQYHRDPSH…MNSGQLCEVW (684 aa)) are Lumenal-facing. In terms of domain architecture, Peptidase M13 spans 93-765 (TCLTEACIRV…MNSGQLCEVW (673 aa)). 5 disulfides stabilise this stretch: cysteine 94–cysteine 99, cysteine 117–cysteine 750, cysteine 125–cysteine 710, cysteine 181–cysteine 430, and cysteine 639–cysteine 762. N-linked (GlcNAc...) asparagine glycans are attached at residues asparagine 161, asparagine 165, asparagine 206, asparagine 266, asparagine 311, asparagine 378, and asparagine 534. Histidine 602 serves as a coordination point for Zn(2+). Residue glutamate 603 is part of the active site. Residue histidine 606 participates in Zn(2+) binding. 2 N-linked (GlcNAc...) asparagine glycosylation sites follow: asparagine 627 and asparagine 635. Zn(2+) is bound at residue glutamate 662. Aspartate 666 (proton donor) is an active-site residue.

It belongs to the peptidase M13 family. The cofactor is Zn(2+). In terms of tissue distribution, isoform ECE2-1 and isoform ECE2-2 are expressed in brain and adrenal gland.

The protein localises to the golgi apparatus membrane. The protein resides in the cytoplasmic vesicle. It localises to the secretory vesicle membrane. The enzyme catalyses Hydrolysis of the 21-Trp-|-Val-22 bond in big endothelin to form endothelin 1.. Converts big endothelin-1 to endothelin-1. Also involved in the processing of various neuroendocrine peptides, including neurotensin, angiotensin I, substance P, proenkephalin-derived peptides, and prodynorphin-derived peptides. May play a role in amyloid-beta processing. The protein is Endothelin-converting enzyme 2 of Bos taurus (Bovine).